Here is a 115-residue protein sequence, read N- to C-terminus: NADH-ubiquinone oxidoreductase chain 3 (115 aa).

The next 3 membrane-spanning stretches (helical) occupy residues 3–23 (VMLTLMTNVTLASLLVLIAFW), 55–75 (FFLVAITFLLFDLEIALLLPL), and 84–104 (LTTMLIMALLLISLLAASLAY).

It belongs to the complex I subunit 3 family. In terms of assembly, core subunit of respiratory chain NADH dehydrogenase (Complex I) which is composed of 45 different subunits. Interacts with TMEM186. Interacts with TMEM242.

The protein localises to the mitochondrion inner membrane. It catalyses the reaction a ubiquinone + NADH + 5 H(+)(in) = a ubiquinol + NAD(+) + 4 H(+)(out). Its function is as follows. Core subunit of the mitochondrial membrane respiratory chain NADH dehydrogenase (Complex I) which catalyzes electron transfer from NADH through the respiratory chain, using ubiquinone as an electron acceptor. Essential for the catalytic activity of complex I. The sequence is that of NADH-ubiquinone oxidoreductase chain 3 from Canis lupus familiaris (Dog).